Here is a 1358-residue protein sequence, read N- to C-terminus: DNA-directed RNA polymerase subunit beta (1358 aa).

This sequence belongs to the RNA polymerase beta chain family. The RNAP catalytic core consists of 2 alpha, 1 beta, 1 beta' and 1 omega subunit. When a sigma factor is associated with the core the holoenzyme is formed, which can initiate transcription.

The enzyme catalyses RNA(n) + a ribonucleoside 5'-triphosphate = RNA(n+1) + diphosphate. DNA-dependent RNA polymerase catalyzes the transcription of DNA into RNA using the four ribonucleoside triphosphates as substrates. The polypeptide is DNA-directed RNA polymerase subunit beta (Azotobacter vinelandii (strain DJ / ATCC BAA-1303)).